The chain runs to 768 residues: Cullin-3 (768 aa).

Serine 2 is modified (N-acetylserine). An interaction with KLHL18 region spans residues 2 to 41; sequence SNLSKGTGSRKDTKMRIRAFPMTMDEKYVNSIWDLLKNAI. Serine 585 bears the Phosphoserine mark. The disordered stretch occupies residues 677-698; that stretch reads VAAKQGESDPERKETRQKVDDD. The segment covering 682–698 has biased composition (basic and acidic residues); it reads GESDPERKETRQKVDDD. Positions 698–760 constitute a Cullin neddylation domain; that stretch reads DRKHEIEAAI…REYLARTPED (63 aa). Lysine 712 is covalently cross-linked (Glycyl lysine isopeptide (Lys-Gly) (interchain with G-Cter in NEDD8)).

It belongs to the cullin family. Forms neddylation-dependent homodimers. Component of multiple BCR (BTB-CUL3-RBX1) E3 ubiquitin-protein ligase complexes formed of CUL3, RBX1 and a variable BTB domain-containing protein acting as both, adapter to cullin and substrate recognition subunit. The BCR complex may be active as a heterodimeric complex, in which NEDD8, covalently attached to one CUL3 molecule, binds to the C-terminus of a second CUL3 molecule. Interacts with RBX1, RNF7 and TIP120A/CAND1. Part of the BCR(SPOP) containing SPOP, and of BCR containing homodimeric SPOPL or the heterodimer formed by SPOP and SPOPL. Part of the probable BCR(KLHL9-KLHL13) complex with BTB domain proteins KLHL9 and KLHL13. Part of the BCR(KLHL41) complex containing KLHL41. Component of the BCR(KLHL12) E3 ubiquitin ligase complex, at least composed of CUL3 and KLHL12 and RBX1. Component of the BCR(KLHL3) E3 ubiquitin ligase complex, at least composed of CUL3 and KLHL3 and RBX1. Part of the BCR(ENC1) complex containing ENC1. Part of a complex consisting of BMI1/PCGF4, CUL3 and SPOP. Part of a complex consisting of BRMS1, CUL3 and SPOP. Component of the BCR(KLHL21) E3 ubiquitin ligase complex, at least composed of CUL3, KLHL21 and RBX1. Component of the BCR(KLHL22) E3 ubiquitin ligase complex, at least composed of CUL3, KLHL22 and RBX1. Component of the BCR(KLHL25) E3 ubiquitin ligase complex, at least composed of CUL3, KLHL25 and RBX1. Part of a complex consisting of MACROH2A1, CUL3 and SPOP. Component of the BCR(KLHL42) E3 ubiquitin ligase complex, at least composed of CUL3 and KLHL42. Component of the BCR(KBTBD8) E3 ubiquitin ligase complex, at least composed of CUL3, KBTBD8 and RBX1. Interacts with KLHL42 (via the BTB domain). Interacts with KATNA1; the interaction is enhanced by KLHL42. Interacts with KCTD5, KLHL9, KLHL11, KLHL13, GAN, ZBTB16, KLHL3, KLHL15, KLHL20, KLHL36, GMCL2, BTBD1. Part of a complex that contains CUL3, RBX1 and GAN. Interacts (via BTB domain) with KLHL17; the interaction regulates surface GRIK2 expression. Interacts with KCTD7. Part of the BCR(GAN) complex containing GAN. Part of the BCR(KEAP1) complex containing KEAP1. Interacts with KAT5 and ATF2. Interacts with KCTD17 in the BCR(KCTD17) E3 ubiquitin ligase complex, at least composed of CUL3, KCTD17 and RBX1. Interacts (when neddylated) with ARIH1; leading to activate the E3 ligase activity of ARIH1. Interacts with COPS9. Interacts with PPP2R5B; this interaction is indirect and mediated through KLHL15-binding and leads to PPP2R5B proteasomal degradation. Interacts with RBBP8/CtIP; this interaction is indirect and mediated through KLHL15-binding and leads to RBBP8 proteasomal degradation. Interacts with KLHL24 in the BCR(KLHL24) E3 ubiquitin ligase complex, composed of CUL3, RBX1 and KLHL24. Interacts with RHOBTB2. Interacts with CYCE. Interacts with KLHL10. Interacts with AURKA and KLHL18 (via BTB domain). Interacts (unneddylated form) with DCUN1D1, DCUN1D2, DCUN1D3, DCUN1D4 and DCUN1D5; these interactions promote the cullin neddylation. Component of a BCR3 (BTB-CUL3-RBX1) E3 ubiquitin ligase complex, also named Cul3-RING ubiquitin ligase complex CUL3(KBTBD6/7), composed of CUL3, RBX1, KBTBD6 and KBTBD7. Component of the BCR(KBTBD2) E3 ubiquitin ligase complex, at least composed of CUL3, KBTBD2 and RBX1. Interacts with KBTBD2 (via the BTB domain). Component of the BCR(KBTBD4) E3 ubiquitin ligase complex, at least composed of CUL3, KBTBD4 and RBX1. In terms of processing, neddylated. Attachment of NEDD8 is required for the E3 ubiquitin-protein ligase activity of the BCR complex. Deneddylated via its interaction with the COP9 signalosome (CSN) complex. As to expression, widely expressed, with highest expression in brain, spleen and testis. In the testis, it is mainly expressed in spermatids.

It is found in the nucleus. It localises to the golgi apparatus. Its subcellular location is the cell projection. The protein resides in the cilium. The protein localises to the flagellum. It is found in the cytoplasm. It localises to the cytoskeleton. Its subcellular location is the spindle. The protein resides in the microtubule organizing center. The protein localises to the centrosome. It is found in the spindle pole. It participates in protein modification; protein ubiquitination. Its function is as follows. Core component of multiple cullin-RING-based BCR (BTB-CUL3-RBX1) E3 ubiquitin-protein ligase complexes which mediate the ubiquitination and subsequent proteasomal degradation of target proteins. BCR complexes and ARIH1 collaborate in tandem to mediate ubiquitination of target proteins. As a scaffold protein may contribute to catalysis through positioning of the substrate and the ubiquitin-conjugating enzyme. The E3 ubiquitin-protein ligase activity of the complex is dependent on the neddylation of the cullin subunit and is inhibited by the association of the deneddylated cullin subunit with TIP120A/CAND1. The functional specificity of the BCR complex depends on the BTB domain-containing protein as the substrate recognition component. BCR(KLHL42) is involved in ubiquitination of KATNA1. BCR(SPOP) is involved in ubiquitination of BMI1/PCGF4, BRMS1, MACROH2A1 and DAXX, GLI2 and GLI3. Can also form a cullin-RING-based BCR (BTB-CUL3-RBX1) E3 ubiquitin-protein ligase complex containing homodimeric SPOPL or the heterodimer formed by SPOP and SPOPL; these complexes have lower ubiquitin ligase activity. BCR(KLHL9-KLHL13) controls the dynamic behavior of AURKB on mitotic chromosomes and thereby coordinates faithful mitotic progression and completion of cytokinesis. BCR(KLHL12) is involved in ER-Golgi transport by regulating the size of COPII coats, thereby playing a key role in collagen export, which is required for embryonic stem (ES) cells division: BCR(KLHL12) acts by mediating monoubiquitination of SEC31 (SEC31A or SEC31B). BCR(KLHL3) acts as a regulator of ion transport in the distal nephron; by mediating ubiquitination of WNK4. The BCR(KLHL20) E3 ubiquitin ligase complex is involved in interferon response and anterograde Golgi to endosome transport: it mediates both ubiquitination leading to degradation and 'Lys-33'-linked ubiquitination. The BCR(KLHL21) E3 ubiquitin ligase complex regulates localization of the chromosomal passenger complex (CPC) from chromosomes to the spindle midzone in anaphase and mediates the ubiquitination of AURKB. The BCR(KLHL22) ubiquitin ligase complex mediates monoubiquitination of PLK1, leading to PLK1 dissociation from phosphoreceptor proteins and subsequent removal from kinetochores, allowing silencing of the spindle assembly checkpoint (SAC) and chromosome segregation. The BCR(KLHL22) ubiquitin ligase complex is also responsible for the amino acid-stimulated 'Lys-48' polyubiquitination and proteasomal degradation of DEPDC5. Through the degradation of DEPDC5, releases the GATOR1 complex-mediated inhibition of the TORC1 pathway. The BCR(KLHL25) ubiquitin ligase complex is involved in translational homeostasis by mediating ubiquitination and subsequent degradation of hypophosphorylated EIF4EBP1 (4E-BP1). The BCR(KLHL25) ubiquitin ligase complex is also involved in lipid synthesis by mediating ubiquitination and degradation of ACLY. The BCR(KBTBD8) complex acts by mediating monoubiquitination of NOLC1 and TCOF1, leading to remodel the translational program of differentiating cells in favor of neural crest specification. Involved in ubiquitination of cyclin E and of cyclin D1 (in vitro) thus involved in regulation of G1/S transition. Involved in the ubiquitination of KEAP1, ENC1 and KLHL41. In concert with ATF2 and RBX1, promotes degradation of KAT5 thereby attenuating its ability to acetylate and activate ATM. The BCR(KCTD17) E3 ubiquitin ligase complex mediates ubiquitination and degradation of TCHP, a down-regulator of cilium assembly, thereby inducing ciliogenesis. The BCR(KLHL24) E3 ubiquitin ligase complex mediates ubiquitination of KRT14, controls KRT14 levels during keratinocytes differentiation, and is essential for skin integrity. The BCR(KLHL18) E3 ubiquitin ligase complex mediates the ubiquitination of AURKA leading to its activation at the centrosome which is required for initiating mitotic entry. The BCR(KEAP1) E3 ubiquitin ligase complex acts as a key sensor of oxidative and electrophilic stress by mediating ubiquitination and degradation of NFE2L2/NRF2, a transcription factor regulating expression of many cytoprotective genes. As part of the CUL3(KBTBD6/7) E3 ubiquitin ligase complex functions mediates 'Lys-48' ubiquitination and proteasomal degradation of TIAM1. By controlling the ubiquitination of that RAC1 guanine exchange factors (GEF), regulates RAC1 signal transduction and downstream biological processes including the organization of the cytoskeleton, cell migration and cell proliferation. The BCR(KBTBD4) E3 ubiquitin ligase complex targets CoREST corepressor complex components RCOR1, KDM1A/LSD1 and HDAC2 for proteasomal degradation with RCOR1 likely to be the primary target while degradation of KDM1A and HDAC2 is likely due to their association with RCOR1. It also targets RCOR3, MIER2 and MIER3 for proteasomal degradation as well as associated proteins ZNF217 and RREB1 with degradation being dependent on the presence of an ELM2 domain in the target proteins. The BCR(ARMC5) complex mediates premature transcription termination of transcripts that are unfavorably configured for transcriptional elongation by mediating ubiquitination of Pol II subunit POLR2A. Required for 'Lys-63'-linked ubiquitination of large ribosomal subunit protein MRPL12. The sequence is that of Cullin-3 (Cul3) from Mus musculus (Mouse).